The following is a 320-amino-acid chain: Methionyl-tRNA formyltransferase (320 aa).

111-114 is a (6S)-5,6,7,8-tetrahydrofolate binding site; the sequence is SLLP.

This sequence belongs to the Fmt family.

It catalyses the reaction L-methionyl-tRNA(fMet) + (6R)-10-formyltetrahydrofolate = N-formyl-L-methionyl-tRNA(fMet) + (6S)-5,6,7,8-tetrahydrofolate + H(+). Its function is as follows. Attaches a formyl group to the free amino group of methionyl-tRNA(fMet). The formyl group appears to play a dual role in the initiator identity of N-formylmethionyl-tRNA by promoting its recognition by IF2 and preventing the misappropriation of this tRNA by the elongation apparatus. The sequence is that of Methionyl-tRNA formyltransferase from Pediococcus pentosaceus (strain ATCC 25745 / CCUG 21536 / LMG 10740 / 183-1w).